A 137-amino-acid polypeptide reads, in one-letter code: Large ribosomal subunit protein bL17 (137 aa).

This sequence belongs to the bacterial ribosomal protein bL17 family. Part of the 50S ribosomal subunit. Contacts protein L32.

In Rickettsia typhi (strain ATCC VR-144 / Wilmington), this protein is Large ribosomal subunit protein bL17.